Reading from the N-terminus, the 377-residue chain is Anhydro-N-acetylmuramic acid kinase (377 aa).

ATP is bound at residue 12–19; it reads GTSLDGID.

Belongs to the anhydro-N-acetylmuramic acid kinase family.

It catalyses the reaction 1,6-anhydro-N-acetyl-beta-muramate + ATP + H2O = N-acetyl-D-muramate 6-phosphate + ADP + H(+). It participates in amino-sugar metabolism; 1,6-anhydro-N-acetylmuramate degradation. The protein operates within cell wall biogenesis; peptidoglycan recycling. Catalyzes the specific phosphorylation of 1,6-anhydro-N-acetylmuramic acid (anhMurNAc) with the simultaneous cleavage of the 1,6-anhydro ring, generating MurNAc-6-P. Is required for the utilization of anhMurNAc either imported from the medium or derived from its own cell wall murein, and thus plays a role in cell wall recycling. This is Anhydro-N-acetylmuramic acid kinase from Methylorubrum extorquens (strain CM4 / NCIMB 13688) (Methylobacterium extorquens).